Consider the following 714-residue polypeptide: Neutral ceramidase A (714 aa).

Residues 1–23 (MKRSIVFIYSLVILLLSVGFIDA) form the signal peptide. N-linked (GlcNAc...) asparagine glycans are attached at residues Asn-218 and Asn-246. Ser-293 (nucleophile) is an active-site residue. Residues Asn-353, Asn-373, Asn-416, Asn-571, Asn-610, and Asn-700 are each glycosylated (N-linked (GlcNAc...) asparagine).

It belongs to the neutral ceramidase family.

Its subcellular location is the secreted. It carries out the reaction an N-acylsphing-4-enine + H2O = sphing-4-enine + a fatty acid. In terms of biological role, hydrolyzes the sphingolipid ceramide into sphingosine and free fatty acid at an optimal pH of 3.0. Has no activity toward glycosphingolipids, such as GalCer and Galbeta1-3GalNAcbeta1-4(NeuAcalpha2-3)Galbeta1-4Glcbeta1-1'Cer or sphingomyelin. The protein is Neutral ceramidase A (dcd2A) of Dictyostelium discoideum (Social amoeba).